Reading from the N-terminus, the 575-residue chain is Transport inhibitor response 1-like protein Os04g0395600 (575 aa).

An F-box domain is found at methionine 1–valine 45. Position 69 (lysine 69) interacts with 1D-myo-inositol hexakisphosphate. The interval aspartate 76–phenylalanine 77 is interaction with auxin-responsive proteins. Residues lysine 108–arginine 109 and arginine 340 contribute to the 1D-myo-inositol hexakisphosphate site. The interval proline 343–valine 348 is interaction with auxin-responsive proteins. Position 396–398 (arginine 396–arginine 398) interacts with 1D-myo-inositol hexakisphosphate. Residues cysteine 400 to proline 404 form an interaction with auxin-responsive proteins region. Residue arginine 431 coordinates 1D-myo-inositol hexakisphosphate. The interaction with auxin-responsive proteins stretch occupies residues alanine 459–phenylalanine 460. Residues arginine 479–lysine 480 and arginine 504 contribute to the 1D-myo-inositol hexakisphosphate site.

Part of a SCF (SKP1-cullin-F-box) protein ligase complex. May interact with auxin and auxin-responsive proteins.

It localises to the nucleus. Its pathway is protein modification; protein ubiquitination. In Oryza sativa subsp. japonica (Rice), this protein is Transport inhibitor response 1-like protein Os04g0395600.